Here is a 138-residue protein sequence, read N- to C-terminus: Small ribosomal subunit protein uS17 (138 aa).

Composition is skewed to basic and acidic residues over residues 1–18 (MSEEERNRGAEPEERAEA) and 43–55 (AFDRDAGKVQKDT). The disordered stretch occupies residues 1-62 (MSEEERNRGA…KDTRRGRRKE (62 aa)).

Belongs to the universal ribosomal protein uS17 family. Part of the 30S ribosomal subunit.

Functionally, one of the primary rRNA binding proteins, it binds specifically to the 5'-end of 16S ribosomal RNA. The polypeptide is Small ribosomal subunit protein uS17 (Rubrobacter xylanophilus (strain DSM 9941 / JCM 11954 / NBRC 16129 / PRD-1)).